A 130-amino-acid chain; its full sequence is Small ribosomal subunit protein uS11c (130 aa).

This sequence belongs to the universal ribosomal protein uS11 family. As to quaternary structure, part of the 30S ribosomal subunit.

The protein resides in the plastid. The protein localises to the chloroplast. The sequence is that of Small ribosomal subunit protein uS11c from Zygnema circumcarinatum (Green alga).